Consider the following 421-residue polypeptide: UDP-N-acetylglucosamine 1-carboxyvinyltransferase (421 aa).

Position 22–23 (22–23) interacts with phosphoenolpyruvate; sequence KN. Arg-91 lines the UDP-N-acetyl-alpha-D-glucosamine pocket. Residue Cys-115 is the Proton donor of the active site. 2-(S-cysteinyl)pyruvic acid O-phosphothioketal is present on Cys-115. UDP-N-acetyl-alpha-D-glucosamine is bound by residues 120–124, 160–163, Asp-305, and Ile-327; these read RPVDL and KVSV.

It belongs to the EPSP synthase family. MurA subfamily.

Its subcellular location is the cytoplasm. The catalysed reaction is phosphoenolpyruvate + UDP-N-acetyl-alpha-D-glucosamine = UDP-N-acetyl-3-O-(1-carboxyvinyl)-alpha-D-glucosamine + phosphate. The protein operates within cell wall biogenesis; peptidoglycan biosynthesis. In terms of biological role, cell wall formation. Adds enolpyruvyl to UDP-N-acetylglucosamine. In Photorhabdus laumondii subsp. laumondii (strain DSM 15139 / CIP 105565 / TT01) (Photorhabdus luminescens subsp. laumondii), this protein is UDP-N-acetylglucosamine 1-carboxyvinyltransferase.